We begin with the raw amino-acid sequence, 222 residues long: Cyclin-dependent kinase inhibitor 3 (222 aa).

The disordered stretch occupies residues 68–101; that stretch reads KPSSLIEPKQPPRVHRSGIKESGSRSRVDSVNSV. Basic and acidic residues predominate over residues 85-95; that stretch reads GIKESGSRSRV.

It belongs to the CDI family. ICK/KRP subfamily. As to quaternary structure, specifically interacts with CDKA-1, but not with CDKB1-1.

It localises to the nucleus. It is found in the nucleoplasm. Binds and inhibits CYCD2-1/CDKA-1 complex kinase activity. May target specifically CDKA-1. The sequence is that of Cyclin-dependent kinase inhibitor 3 (KRP3) from Arabidopsis thaliana (Mouse-ear cress).